The sequence spans 889 residues: Coatomer subunit gamma-2 (889 aa).

5 HEAT repeats span residues V67 to A102, D103 to L140, R289 to L326, V328 to E360, and S361 to L398. The tract at residues P596–P617 is disordered.

It belongs to the COPG family. Oligomeric complex that consists of at least the alpha, beta, beta', gamma, delta, epsilon and zeta subunits.

It is found in the cytoplasm. The protein resides in the golgi apparatus membrane. It localises to the cytoplasmic vesicle. The protein localises to the COPI-coated vesicle membrane. Its function is as follows. The coatomer is a cytosolic protein complex that binds to dilysine motifs and reversibly associates with Golgi non-clathrin-coated vesicles, which further mediate biosynthetic protein transport from the ER, via the Golgi up to the trans Golgi network. Coatomer complex is required for budding from Golgi membranes, and is essential for the retrograde Golgi-to-ER transport of dilysine-tagged proteins. This chain is Coatomer subunit gamma-2, found in Oryza sativa subsp. japonica (Rice).